Reading from the N-terminus, the 180-residue chain is NAD(P)H-quinone oxidoreductase subunit I, chloroplastic (180 aa).

4Fe-4S ferredoxin-type domains are found at residues 55–84 and 95–124; these read GRIH…VDWR and LNYS…MTEE. [4Fe-4S] cluster is bound by residues C64, C67, C70, C74, C104, C107, C110, and C114.

It belongs to the complex I 23 kDa subunit family. As to quaternary structure, NDH is composed of at least 16 different subunits, 5 of which are encoded in the nucleus. It depends on [4Fe-4S] cluster as a cofactor.

It is found in the plastid. The protein resides in the chloroplast thylakoid membrane. The enzyme catalyses a plastoquinone + NADH + (n+1) H(+)(in) = a plastoquinol + NAD(+) + n H(+)(out). The catalysed reaction is a plastoquinone + NADPH + (n+1) H(+)(in) = a plastoquinol + NADP(+) + n H(+)(out). NDH shuttles electrons from NAD(P)H:plastoquinone, via FMN and iron-sulfur (Fe-S) centers, to quinones in the photosynthetic chain and possibly in a chloroplast respiratory chain. The immediate electron acceptor for the enzyme in this species is believed to be plastoquinone. Couples the redox reaction to proton translocation, and thus conserves the redox energy in a proton gradient. The sequence is that of NAD(P)H-quinone oxidoreductase subunit I, chloroplastic from Agrostis stolonifera (Creeping bentgrass).